Reading from the N-terminus, the 323-residue chain is MRVILGPMEGVLDHLMRDMLTQINDYDFCVTEFVRVVNLLLPDHVFYRLCPELQQGSKTPSGVPVKVQLLGQDPHWMAENAIRAAELGAYGIDLNFGCPAKMVNQSKGGAALLQHPELIYQVVKACRDAVPAHIPVSAKIRLGWEDPEDCFEIVDAVAQAKADELTVHARTKAGGYKASEIKWHYIDQIRQKCSIPLIANGEVWNYADGQACIQTTGVDSLMVCRGALNVPNLGNVVKHNHAAMPWHEVVDLLLRYTQFEVRGDKGKYYPNRIKQWFAYLRHAYPQANELFGELRTLTQVEPIVDQLHRYRDQLHHAAAELPV.

FMN-binding positions include 7 to 9 (PME) and Q68. C98 functions as the Proton donor in the catalytic mechanism. Residues K139, 200–202 (NGE), and 224–225 (CR) contribute to the FMN site.

The protein belongs to the Dus family. DusC subfamily. It depends on FMN as a cofactor.

The catalysed reaction is 5,6-dihydrouridine(16) in tRNA + NADP(+) = uridine(16) in tRNA + NADPH + H(+). It carries out the reaction 5,6-dihydrouridine(16) in tRNA + NAD(+) = uridine(16) in tRNA + NADH + H(+). Functionally, catalyzes the synthesis of 5,6-dihydrouridine (D), a modified base found in the D-loop of most tRNAs, via the reduction of the C5-C6 double bond in target uridines. Specifically modifies U16 in tRNAs. This is tRNA-dihydrouridine(16) synthase from Vibrio cholerae serotype O1 (strain ATCC 39315 / El Tor Inaba N16961).